A 387-amino-acid chain; its full sequence is Small ribosomal subunit protein uS5m (387 aa).

The transit peptide at Met-1–Cys-22 directs the protein to the mitochondrion. Positions Phe-33–Lys-87 are disordered. The span at Lys-48–Glu-60 shows a compositional bias: basic and acidic residues. Ser-85 carries the phosphoserine modification. One can recognise an S5 DRBM domain in the interval Leu-225–Ile-288.

This sequence belongs to the universal ribosomal protein uS5 family. Component of the mitochondrial small ribosomal subunit (mt-SSU). Mature yeast 74S mitochondrial ribosomes consist of a small (37S) and a large (54S) subunit. The 37S small subunit contains a 15S ribosomal RNA (15S mt-rRNA) and at least 32 different proteins. The 54S large subunit contains a 21S rRNA (21S mt-rRNA) and at least 45 different proteins. uS3m, uS4m and uS5m form the narrow entry site of the mRNA channel.

The protein resides in the mitochondrion. Component of the mitochondrial ribosome (mitoribosome), a dedicated translation machinery responsible for the synthesis of mitochondrial genome-encoded proteins, including at least some of the essential transmembrane subunits of the mitochondrial respiratory chain. The mitoribosomes are attached to the mitochondrial inner membrane and translation products are cotranslationally integrated into the membrane. The chain is Small ribosomal subunit protein uS5m (mrp5) from Schizosaccharomyces pombe (strain 972 / ATCC 24843) (Fission yeast).